The following is a 300-amino-acid chain: tRNA dimethylallyltransferase (300 aa).

9–16 contributes to the ATP binding site; that stretch reads GTTASGKS. A substrate-binding site is contributed by 11–16; that stretch reads TASGKS. The segment at 34–37 is interaction with substrate tRNA; that stretch reads DSLC.

This sequence belongs to the IPP transferase family. In terms of assembly, monomer. It depends on Mg(2+) as a cofactor.

The enzyme catalyses adenosine(37) in tRNA + dimethylallyl diphosphate = N(6)-dimethylallyladenosine(37) in tRNA + diphosphate. Functionally, catalyzes the transfer of a dimethylallyl group onto the adenine at position 37 in tRNAs that read codons beginning with uridine, leading to the formation of N6-(dimethylallyl)adenosine (i(6)A). This is tRNA dimethylallyltransferase from Campylobacter fetus subsp. fetus (strain 82-40).